A 163-amino-acid chain; its full sequence is MATLLAWVGVSCCELAEEDFLAVSPLDPRYREVHYVLLDPSCSGSGMPSRQLEDPGAGTPSPVRLHALAGFQQRALCHALTFPSLQRLVYSMCSLCQEENEDMVPDALQQNPGAFRLAPALPARPHRGLSTFPGAEHCLRASPKTTLSGGFFVAVIERVEMPT.

Cys-93 acts as the Nucleophile in catalysis.

It belongs to the class I-like SAM-binding methyltransferase superfamily. RsmB/NOP family. As to expression, ubiquitous.

The sequence is that of Putative NOL1/NOP2/Sun domain family member 5B (NSUN5P1) from Homo sapiens (Human).